We begin with the raw amino-acid sequence, 185 residues long: Probable chorismate pyruvate-lyase 1 (185 aa).

The substrate site is built by Arg68, Leu106, and Glu164.

It belongs to the UbiC family.

The protein resides in the cytoplasm. The catalysed reaction is chorismate = 4-hydroxybenzoate + pyruvate. The protein operates within cofactor biosynthesis; ubiquinone biosynthesis. In terms of biological role, removes the pyruvyl group from chorismate, with concomitant aromatization of the ring, to provide 4-hydroxybenzoate (4HB) for the ubiquinone pathway. In Pseudomonas entomophila (strain L48), this protein is Probable chorismate pyruvate-lyase 1.